We begin with the raw amino-acid sequence, 164 residues long: Protein SprT (164 aa).

Residues 14–156 form the SprT-like domain; it reads QQAETFFKRT…LCRRCREPLV (143 aa). Residue H69 coordinates Zn(2+). E70 is an active-site residue. H73 provides a ligand contact to Zn(2+).

It belongs to the SprT family. The cofactor is Zn(2+).

The protein localises to the cytoplasm. The chain is Protein SprT from Pseudomonas savastanoi pv. phaseolicola (strain 1448A / Race 6) (Pseudomonas syringae pv. phaseolicola (strain 1448A / Race 6)).